The primary structure comprises 523 residues: 2-isopropylmalate synthase (523 aa).

Positions 5 to 267 (VIIFDTTLRD…HTNINHHEIW (263 aa)) constitute a Pyruvate carboxyltransferase domain. Mn(2+) is bound by residues aspartate 14, histidine 202, histidine 204, and asparagine 238. Positions 392–523 (RLDYFSVQSG…HNKENNKEIV (132 aa)) are regulatory domain.

This sequence belongs to the alpha-IPM synthase/homocitrate synthase family. LeuA type 1 subfamily. Homodimer. Mn(2+) serves as cofactor.

The protein localises to the cytoplasm. The catalysed reaction is 3-methyl-2-oxobutanoate + acetyl-CoA + H2O = (2S)-2-isopropylmalate + CoA + H(+). It participates in amino-acid biosynthesis; L-leucine biosynthesis; L-leucine from 3-methyl-2-oxobutanoate: step 1/4. Functionally, catalyzes the condensation of the acetyl group of acetyl-CoA with 3-methyl-2-oxobutanoate (2-ketoisovalerate) to form 3-carboxy-3-hydroxy-4-methylpentanoate (2-isopropylmalate). The protein is 2-isopropylmalate synthase of Salmonella arizonae (strain ATCC BAA-731 / CDC346-86 / RSK2980).